The following is a 370-amino-acid chain: DNA replication and repair protein RecF (370 aa).

30 to 37 is a binding site for ATP; that stretch reads GQNGMGKT.

Belongs to the RecF family.

It is found in the cytoplasm. Its function is as follows. The RecF protein is involved in DNA metabolism; it is required for DNA replication and normal SOS inducibility. RecF binds preferentially to single-stranded, linear DNA. It also seems to bind ATP. This Bacteroides fragilis (strain ATCC 25285 / DSM 2151 / CCUG 4856 / JCM 11019 / LMG 10263 / NCTC 9343 / Onslow / VPI 2553 / EN-2) protein is DNA replication and repair protein RecF.